We begin with the raw amino-acid sequence, 884 residues long: Valine--tRNA ligase (884 aa).

Residues 43–53 (PNVTGSLHIGH) carry the 'HIGH' region motif. The 'KMSKS' region signature appears at 530–534 (KMSKS). K533 lines the ATP pocket. Residues 817–884 (VIDLDAERGR…KLKAALERLM (68 aa)) are a coiled coil.

This sequence belongs to the class-I aminoacyl-tRNA synthetase family. ValS type 1 subfamily. As to quaternary structure, monomer.

It localises to the cytoplasm. The enzyme catalyses tRNA(Val) + L-valine + ATP = L-valyl-tRNA(Val) + AMP + diphosphate. Functionally, catalyzes the attachment of valine to tRNA(Val). As ValRS can inadvertently accommodate and process structurally similar amino acids such as threonine, to avoid such errors, it has a 'posttransfer' editing activity that hydrolyzes mischarged Thr-tRNA(Val) in a tRNA-dependent manner. The polypeptide is Valine--tRNA ligase (Zymomonas mobilis subsp. mobilis (strain ATCC 31821 / ZM4 / CP4)).